Reading from the N-terminus, the 156-residue chain is Arginine repressor (156 aa).

It belongs to the ArgR family.

The protein localises to the cytoplasm. The protein operates within amino-acid biosynthesis; L-arginine biosynthesis [regulation]. Its function is as follows. Regulates arginine biosynthesis genes. The chain is Arginine repressor from Salmonella agona (strain SL483).